The following is a 259-amino-acid chain: 5'-nucleotidase SurE (259 aa).

A divalent metal cation is bound by residues aspartate 10, aspartate 11, serine 41, and asparagine 96.

The protein belongs to the SurE nucleotidase family. A divalent metal cation serves as cofactor.

Its subcellular location is the cytoplasm. It carries out the reaction a ribonucleoside 5'-phosphate + H2O = a ribonucleoside + phosphate. Nucleotidase that shows phosphatase activity on nucleoside 5'-monophosphates. This is 5'-nucleotidase SurE from Wolinella succinogenes (strain ATCC 29543 / DSM 1740 / CCUG 13145 / JCM 31913 / LMG 7466 / NCTC 11488 / FDC 602W) (Vibrio succinogenes).